The primary structure comprises 125 residues: Large ribosomal subunit protein bL12 (125 aa).

It belongs to the bacterial ribosomal protein bL12 family. As to quaternary structure, homodimer. Part of the ribosomal stalk of the 50S ribosomal subunit. Forms a multimeric L10(L12)X complex, where L10 forms an elongated spine to which 2 to 4 L12 dimers bind in a sequential fashion. Binds GTP-bound translation factors.

Forms part of the ribosomal stalk which helps the ribosome interact with GTP-bound translation factors. Is thus essential for accurate translation. In Delftia acidovorans (strain DSM 14801 / SPH-1), this protein is Large ribosomal subunit protein bL12.